The following is a 216-amino-acid chain: Somatotropin (216 aa).

Positions Met1 to Thr26 are cleaved as a signal peptide. His45 is a binding site for Zn(2+). Cys78 and Cys189 are joined by a disulfide. Ser131 carries the phosphoserine modification. Glu198 is a binding site for Zn(2+). Cys206 and Cys214 form a disulfide bridge.

It belongs to the somatotropin/prolactin family.

It localises to the secreted. Its function is as follows. Plays an important role in growth control. Its major role in stimulating body growth is to stimulate the liver and other tissues to secrete IGF1. It stimulates both the differentiation and proliferation of myoblasts. It also stimulates amino acid uptake and protein synthesis in muscle and other tissues. The protein is Somatotropin (GH1) of Felis catus (Cat).